The primary structure comprises 321 residues: Lipoyl synthase (321 aa).

7 residues coordinate [4Fe-4S] cluster: Cys68, Cys73, Cys79, Cys94, Cys98, Cys101, and Ser308. The Radical SAM core domain occupies 80 to 297; that stretch reads FNHGTATFMI…KVLADELGFT (218 aa).

The protein belongs to the radical SAM superfamily. Lipoyl synthase family. The cofactor is [4Fe-4S] cluster.

The protein resides in the cytoplasm. The catalysed reaction is [[Fe-S] cluster scaffold protein carrying a second [4Fe-4S](2+) cluster] + N(6)-octanoyl-L-lysyl-[protein] + 2 oxidized [2Fe-2S]-[ferredoxin] + 2 S-adenosyl-L-methionine + 4 H(+) = [[Fe-S] cluster scaffold protein] + N(6)-[(R)-dihydrolipoyl]-L-lysyl-[protein] + 4 Fe(3+) + 2 hydrogen sulfide + 2 5'-deoxyadenosine + 2 L-methionine + 2 reduced [2Fe-2S]-[ferredoxin]. It participates in protein modification; protein lipoylation via endogenous pathway; protein N(6)-(lipoyl)lysine from octanoyl-[acyl-carrier-protein]: step 2/2. Catalyzes the radical-mediated insertion of two sulfur atoms into the C-6 and C-8 positions of the octanoyl moiety bound to the lipoyl domains of lipoate-dependent enzymes, thereby converting the octanoylated domains into lipoylated derivatives. This chain is Lipoyl synthase, found in Shewanella denitrificans (strain OS217 / ATCC BAA-1090 / DSM 15013).